The following is a 258-amino-acid chain: UPF0328 protein ECU07_0060 (258 aa).

Belongs to the UPF0328 family.

This chain is UPF0328 protein ECU07_0060, found in Encephalitozoon cuniculi (strain GB-M1) (Microsporidian parasite).